We begin with the raw amino-acid sequence, 390 residues long: GTPase Obg (390 aa).

In terms of domain architecture, Obg spans 1 to 159; the sequence is MKFVDEASIL…RDLLLELMLL (159 aa). Residues 127-147 form a disordered region; the sequence is NTRFKSSVNRTPRQKTNGTPG. The segment covering 129 to 145 has biased composition (polar residues); the sequence is RFKSSVNRTPRQKTNGT. Residues 160-333 form the OBG-type G domain; the sequence is ADVGMLGMPN…LCWDVMTFII (174 aa). GTP-binding positions include 166–173, 191–195, 213–216, 283–286, and 314–316; these read GMPNAGKS, FTTLV, DIPG, NKID, and SAA. Residues S173 and T193 each contribute to the Mg(2+) site.

This sequence belongs to the TRAFAC class OBG-HflX-like GTPase superfamily. OBG GTPase family. As to quaternary structure, monomer. It depends on Mg(2+) as a cofactor.

The protein localises to the cytoplasm. In terms of biological role, an essential GTPase which binds GTP, GDP and possibly (p)ppGpp with moderate affinity, with high nucleotide exchange rates and a fairly low GTP hydrolysis rate. Plays a role in control of the cell cycle, stress response, ribosome biogenesis and in those bacteria that undergo differentiation, in morphogenesis control. The sequence is that of GTPase Obg from Salmonella gallinarum (strain 287/91 / NCTC 13346).